The primary structure comprises 606 residues: Lysosomal cobalamin transporter ABCD4 (606 aa).

The 294-residue stretch at 39-332 folds into the ABC transmembrane type-1 domain; that stretch reads NALMFLTLLC…CFTQLIDLST (294 aa). 5 helical membrane-spanning segments follow: residues 43–63, 76–96, 190–210, 279–299, and 314–334; these read FLTLLCLTLLEQFVIYQVGLI, LEGFKTLTFLAVMLIVLNSTL, IFGYFILGTVVNKTLMGPIVM, YLGSILSYVVIAIPIFSGVYG, and AFVCIYLISCFTQLIDLSTTL. One can recognise an ABC transporter domain in the interval 389–603; sequence LERVSISAPS…GGGRWELMRI (215 aa). Position 421–428 (421–428) interacts with ATP; that stretch reads GNTGTGKT.

This sequence belongs to the ABC transporter superfamily. ABCD family. Peroxisomal fatty acyl CoA transporter (TC 3.A.1.203) subfamily. As to quaternary structure, homodimer or heterodimer. Interacts with LMBRD1; this interaction induces the translocation of ABCD4 from the ER to the lysosome membrane. Interacts with LMBRD1 and MMACHC; this interaction ensures the transport of cobalamin from the lysosome to the cytosol. Ubiquitous.

Its subcellular location is the endoplasmic reticulum membrane. It is found in the lysosome membrane. It carries out the reaction an R-cob(III)alamin(out) + ATP + H2O = an R-cob(III)alamin(in) + ADP + phosphate + H(+). Lysosomal membrane protein that transports cobalamin (Vitamin B12) from the lysosomal lumen to the cytosol in an ATP-dependent manner. Targeted by LMBRD1 lysosomal chaperone from the endoplasmic reticulum to the lysosomal membrane. Then forms a complex with lysosomal chaperone LMBRD1 and cytosolic MMACHC to transport cobalamin across the lysosomal membrane. The sequence is that of Lysosomal cobalamin transporter ABCD4 from Homo sapiens (Human).